Here is a 287-residue protein sequence, read N- to C-terminus: MRLIVVSGHSGAGKSVALRVLEDMGYYCVDNLPVNLLESFIQSVSESKQNVAVSIDVRNIPKKLKELTTTLQKLKSSIDLSILFLDADKATLLKRYSETRRVHPLSLSDECHTLDQAIDLEKKMLKPLKEIADILLNSSNQSLHDLSEDVRYRIEGKERNKLIMVFESFGFKFGLPTDADYVFDVRFLPNPHWEPALRPMTGLDAPIKTFLESHDEVLELKRQIQTFIEHWLPLLEKNNRSYLTVAIGCTGGKHRSVYLTQQIGEYFAAMGHTVKIRHTTLEKRNKE.

8 to 15 contributes to the ATP binding site; that stretch reads GHSGAGKS. A GTP-binding site is contributed by 56 to 59; the sequence is DVRN.

Belongs to the RapZ-like family.

Its function is as follows. Displays ATPase and GTPase activities. The protein is Nucleotide-binding protein VV0445 of Vibrio vulnificus (strain YJ016).